We begin with the raw amino-acid sequence, 222 residues long: Ribosomal RNA small subunit methyltransferase G (222 aa).

3 residues coordinate S-adenosyl-L-methionine: G80, L85, and R149.

It belongs to the methyltransferase superfamily. RNA methyltransferase RsmG family.

The protein localises to the cytoplasm. In terms of biological role, specifically methylates the N7 position of a guanine in 16S rRNA. The polypeptide is Ribosomal RNA small subunit methyltransferase G (Treponema pallidum (strain Nichols)).